The following is a 98-amino-acid chain: NADH-ubiquinone oxidoreductase chain 4L (98 aa).

Transmembrane regions (helical) follow at residues methionine 1–isoleucine 21, serine 29–leucine 49, and isoleucine 61–valine 81.

The protein belongs to the complex I subunit 4L family. As to quaternary structure, core subunit of respiratory chain NADH dehydrogenase (Complex I) which is composed of 45 different subunits.

It localises to the mitochondrion inner membrane. It carries out the reaction a ubiquinone + NADH + 5 H(+)(in) = a ubiquinol + NAD(+) + 4 H(+)(out). In terms of biological role, core subunit of the mitochondrial membrane respiratory chain NADH dehydrogenase (Complex I) which catalyzes electron transfer from NADH through the respiratory chain, using ubiquinone as an electron acceptor. Part of the enzyme membrane arm which is embedded in the lipid bilayer and involved in proton translocation. This chain is NADH-ubiquinone oxidoreductase chain 4L (MT-ND4L), found in Echinops telfairi (Lesser hedgehog tenrec).